Consider the following 428-residue polypeptide: Enolase 1 (428 aa).

Q167 is a binding site for (2R)-2-phosphoglycerate. The active-site Proton donor is the E209. Residues D246, E288, and D315 each coordinate Mg(2+). (2R)-2-phosphoglycerate is bound by residues K340, R369, S370, and K391. The active-site Proton acceptor is the K340.

It belongs to the enolase family. In terms of assembly, component of the RNA degradosome, a multiprotein complex involved in RNA processing and mRNA degradation. Mg(2+) serves as cofactor.

It is found in the cytoplasm. The protein localises to the secreted. The protein resides in the cell surface. It catalyses the reaction (2R)-2-phosphoglycerate = phosphoenolpyruvate + H2O. It functions in the pathway carbohydrate degradation; glycolysis; pyruvate from D-glyceraldehyde 3-phosphate: step 4/5. Functionally, catalyzes the reversible conversion of 2-phosphoglycerate (2-PG) into phosphoenolpyruvate (PEP). It is essential for the degradation of carbohydrates via glycolysis. This Pseudomonas syringae pv. tomato (strain ATCC BAA-871 / DC3000) protein is Enolase 1.